The primary structure comprises 60 residues: Single-pass membrane and coiled-coil domain-containing protein 4 homolog (60 aa).

A disordered region spans residues 1–23; sequence MRKLRGGQTKETRKQRQERKEEN. Residues 8–23 show a composition bias toward basic and acidic residues; that stretch reads QTKETRKQRQERKEEN. Residues 8–33 are a coiled coil; that stretch reads QTKETRKQRQERKEENLKIQQQMKTI. A helical membrane pass occupies residues 31–51; that stretch reads KTIVLPTIGVIFLCIVVYVFL.

This sequence belongs to the SMCO4 family.

The protein localises to the membrane. This Anopheles gambiae (African malaria mosquito) protein is Single-pass membrane and coiled-coil domain-containing protein 4 homolog.